The primary structure comprises 547 residues: Chaperonin GroEL (547 aa).

Residues 30–33, Lys-51, 87–91, Gly-415, and Asp-495 contribute to the ATP site; these read TLGP and DGTTT.

This sequence belongs to the chaperonin (HSP60) family. As to quaternary structure, forms a cylinder of 14 subunits composed of two heptameric rings stacked back-to-back. Interacts with the co-chaperonin GroES.

Its subcellular location is the cytoplasm. The enzyme catalyses ATP + H2O + a folded polypeptide = ADP + phosphate + an unfolded polypeptide.. Its function is as follows. Together with its co-chaperonin GroES, plays an essential role in assisting protein folding. The GroEL-GroES system forms a nano-cage that allows encapsulation of the non-native substrate proteins and provides a physical environment optimized to promote and accelerate protein folding. The chain is Chaperonin GroEL from Shewanella halifaxensis (strain HAW-EB4).